A 249-amino-acid chain; its full sequence is dTDP-4-amino-2,3,4,6-tetradeoxy-D-glucose N,N-dimethyltransferase (249 aa).

Residue Arg-30 participates in substrate binding. Residues Ala-59, Glu-80, and 102–103 (DI) contribute to the S-adenosyl-L-methionine site. Substrate-binding positions include Thr-165, 178–182 (RLSHS), and Arg-241.

Belongs to the methyltransferase TylM1/DesVI family. In terms of assembly, homodimer. Mg(2+) is required as a cofactor.

The enzyme catalyses dTDP-4-amino-2,3,4,6-tetradeoxy-alpha-D-erythro-hexopyranose + 2 S-adenosyl-L-methionine = dTDP-alpha-D-forosamine + 2 S-adenosyl-L-homocysteine + 2 H(+). Its function is as follows. Involved in the biosynthesis of forosamine ((4-dimethylamino)-2,3,4,6-tetradeoxy-alpha-D-threo-hexopyranose), a highly deoxygenated sugar component of several bioactive natural products such as the insecticidal spinosyns A and D. Catalyzes the dimethylation of the C-4 amino group from dTDP-4-amino-2,3,4,6-tetradeoxy-alpha-D-glucose to yield dTDP-D-forosamine. In Saccharopolyspora spinosa, this protein is dTDP-4-amino-2,3,4,6-tetradeoxy-D-glucose N,N-dimethyltransferase.